Consider the following 449-residue polypeptide: CBL-interacting protein kinase 31 (449 aa).

Residues Y20–F275 form the Protein kinase domain. ATP is bound by residues I26 to V34 and K49. D143 acts as the Proton acceptor in catalysis. Residues D161–E190 form an activation loop region. In terms of domain architecture, NAF spans D313–E337.

The protein belongs to the protein kinase superfamily. CAMK Ser/Thr protein kinase family. SNF1 subfamily. As to quaternary structure, may interact with CBL3. Requires Mn(2+) as cofactor. In terms of processing, autophosphorylated. In terms of tissue distribution, highly expressed in leaf blade and leaf sheath, but not in other tissues.

The catalysed reaction is L-seryl-[protein] + ATP = O-phospho-L-seryl-[protein] + ADP + H(+). The enzyme catalyses L-threonyl-[protein] + ATP = O-phospho-L-threonyl-[protein] + ADP + H(+). In terms of biological role, involved in cold stress tolerance. CIPK serine-threonine protein kinases interact with CBL proteins. Binding of a CBL protein to the regulatory NAF domain of CIPK protein lead to the activation of the kinase in a calcium-dependent manner. This is CBL-interacting protein kinase 31 (CIPK31) from Oryza sativa subsp. japonica (Rice).